The chain runs to 464 residues: GTPase Der (464 aa).

EngA-type G domains are found at residues 5–169 and 190–368; these read PTIA…KQKG and IKVA…RESH. Residues 11 to 18, 58 to 62, 121 to 124, 196 to 203, 243 to 247, and 308 to 311 contribute to the GTP site; these read GRPNVGKS, DTGGI, NKAD, GRPNAGKS, DTAGM, and NKFD. The KH-like domain maps to 369–461; it reads NLPTTGQLNR…PVIFSARSRV (93 aa).

This sequence belongs to the TRAFAC class TrmE-Era-EngA-EngB-Septin-like GTPase superfamily. EngA (Der) GTPase family. As to quaternary structure, associates with the 50S ribosomal subunit.

Its function is as follows. GTPase that plays an essential role in the late steps of ribosome biogenesis. The chain is GTPase Der from Akkermansia muciniphila (strain ATCC BAA-835 / DSM 22959 / JCM 33894 / BCRC 81048 / CCUG 64013 / CIP 107961 / Muc).